Here is a 203-residue protein sequence, read N- to C-terminus: Putative archaetidylserine decarboxylase proenzyme (203 aa).

S171 serves as the catalytic Schiff-base intermediate with substrate; via pyruvic acid. Residue S171 is modified to Pyruvic acid (Ser); by autocatalysis.

It belongs to the phosphatidylserine decarboxylase family. PSD-A subfamily. In terms of assembly, heterodimer of a large membrane-associated beta subunit and a small pyruvoyl-containing alpha subunit. The cofactor is pyruvate. Is synthesized initially as an inactive proenzyme. Formation of the active enzyme involves a self-maturation process in which the active site pyruvoyl group is generated from an internal serine residue via an autocatalytic post-translational modification. Two non-identical subunits are generated from the proenzyme in this reaction, and the pyruvate is formed at the N-terminus of the alpha chain, which is derived from the carboxyl end of the proenzyme. The post-translation cleavage follows an unusual pathway, termed non-hydrolytic serinolysis, in which the side chain hydroxyl group of the serine supplies its oxygen atom to form the C-terminus of the beta chain, while the remainder of the serine residue undergoes an oxidative deamination to produce ammonia and the pyruvoyl prosthetic group on the alpha chain.

The protein localises to the cell membrane. The catalysed reaction is archaetidylserine + H(+) = archaetidylethanolamine + CO2. Catalyzes the formation of archaetidylethanolamine (PtdEtn) from archaetidylserine (PtdSer). This chain is Putative archaetidylserine decarboxylase proenzyme, found in Methanosarcina barkeri (strain Fusaro / DSM 804).